Here is a 264-residue protein sequence, read N- to C-terminus: Undecaprenyl-diphosphatase (264 aa).

8 helical membrane passes run M1 to I21, Q39 to F59, S83 to F103, S113 to L133, M143 to V163, A184 to I204, L220 to I240, and I243 to F263.

This sequence belongs to the UppP family.

It localises to the cell inner membrane. The enzyme catalyses di-trans,octa-cis-undecaprenyl diphosphate + H2O = di-trans,octa-cis-undecaprenyl phosphate + phosphate + H(+). Its function is as follows. Catalyzes the dephosphorylation of undecaprenyl diphosphate (UPP). Confers resistance to bacitracin. This is Undecaprenyl-diphosphatase from Campylobacter concisus (strain 13826).